Here is a 329-residue protein sequence, read N- to C-terminus: Glycerol-3-phosphate dehydrogenase [NAD(P)+] (329 aa).

Residues S10, W11, R31, and K105 each contribute to the NADPH site. Sn-glycerol 3-phosphate is bound by residues K105, G134, and S136. A138 is an NADPH binding site. Sn-glycerol 3-phosphate is bound by residues K189, D242, S252, R253, and N254. Catalysis depends on K189, which acts as the Proton acceptor. Residue R253 participates in NADPH binding. NADPH contacts are provided by V277 and E279.

It belongs to the NAD-dependent glycerol-3-phosphate dehydrogenase family.

Its subcellular location is the cytoplasm. The enzyme catalyses sn-glycerol 3-phosphate + NAD(+) = dihydroxyacetone phosphate + NADH + H(+). It catalyses the reaction sn-glycerol 3-phosphate + NADP(+) = dihydroxyacetone phosphate + NADPH + H(+). The protein operates within membrane lipid metabolism; glycerophospholipid metabolism. Catalyzes the reduction of the glycolytic intermediate dihydroxyacetone phosphate (DHAP) to sn-glycerol 3-phosphate (G3P), the key precursor for phospholipid synthesis. In Neisseria gonorrhoeae (strain ATCC 700825 / FA 1090), this protein is Glycerol-3-phosphate dehydrogenase [NAD(P)+].